The chain runs to 821 residues: Serine/threonine-protein kinase CTR1 (821 aa).

2 disordered regions span residues 1–76 and 481–502; these read MEMP…LNNQ and NPGG…PSAN. Over residues 14–25 the composition is skewed to low complexity; it reads SQFSDDQVSVSV. Residues 35 to 49 show a composition bias toward polar residues; the sequence is SLSSENRSNHNSGNT. The 259-residue stretch at 551–809 folds into the Protein kinase domain; sequence LNIKEKIGAG…TIMDLLRPLI (259 aa). Residues 557–565 and K578 each bind ATP; that span reads IGAGSFGTV. D676 serves as the catalytic Proton acceptor.

This sequence belongs to the protein kinase superfamily. TKL Ser/Thr protein kinase family. RAF subfamily. Interacts with EIN2 (via C-terminus). Expressed in both seedlings and adult plants.

The enzyme catalyses L-seryl-[protein] + ATP = O-phospho-L-seryl-[protein] + ADP + H(+). The catalysed reaction is L-threonyl-[protein] + ATP = O-phospho-L-threonyl-[protein] + ADP + H(+). Kinase activity is inhibited by C24:1-ceramide during hypoxia (e.g. submergences). Functionally, acts as a negative regulator in the ethylene response pathway. Phosphorylates the cytosolic C-terminal domain of EIN2, preventing the signaling in the absence of ethylene. Interacts with C24:1-ceramide upon hypoxic conditions (e.g. submergences) to in turn regulate EIN2 endoplasmic reticulum (ER)-to-nucleus translocation and EIN3 stabilization. The chain is Serine/threonine-protein kinase CTR1 from Arabidopsis thaliana (Mouse-ear cress).